The sequence spans 153 residues: Ubiquitin/ISG15-conjugating enzyme E2 L6 (153 aa).

Positions 2–149 (MASKRVAKEL…AEEFTLKFGV (148 aa)) constitute a UBC core domain. C86 serves as the catalytic Glycyl thioester intermediate.

This sequence belongs to the ubiquitin-conjugating enzyme family. In terms of assembly, interacts with RNF19A, RNF19B and RNF144B. Interacts with FLT3 (tyrosine phosphorylated). Post-translationally, ISGylated.

It catalyses the reaction S-ubiquitinyl-[E1 ubiquitin-activating enzyme]-L-cysteine + [E2 ubiquitin-conjugating enzyme]-L-cysteine = [E1 ubiquitin-activating enzyme]-L-cysteine + S-ubiquitinyl-[E2 ubiquitin-conjugating enzyme]-L-cysteine.. It functions in the pathway protein modification; protein ubiquitination. Its function is as follows. Catalyzes the covalent attachment of ubiquitin or ISG15 to other proteins. Functions in the E6/E6-AP-induced ubiquitination of p53/TP53. Promotes ubiquitination and subsequent proteasomal degradation of FLT3. In Mus musculus (Mouse), this protein is Ubiquitin/ISG15-conjugating enzyme E2 L6 (Ube2l6).